Reading from the N-terminus, the 379-residue chain is Chaperone protein DnaJ (379 aa).

In terms of domain architecture, J spans 5–70 (DYYEVLGVGK…EKKAAYDQYG (66 aa)). The segment at 139 to 217 (GHEAQIRVPH…CHGQGKLKSQ (79 aa)) adopts a CR-type zinc-finger fold. Zn(2+) contacts are provided by cysteine 152, cysteine 155, cysteine 169, cysteine 172, cysteine 191, cysteine 194, cysteine 205, and cysteine 208. CXXCXGXG motif repeat units lie at residues 152–159 (CDHCHGNG), 169–176 (CPTCHGAG), 191–198 (CPKCHGSG), and 205–212 (CTKCHGQG). Residues 356 to 379 (VHEGGSRHSPQEQSWLDKVKSFFS) are disordered.

This sequence belongs to the DnaJ family. Homodimer. The cofactor is Zn(2+).

It localises to the cytoplasm. Its function is as follows. Participates actively in the response to hyperosmotic and heat shock by preventing the aggregation of stress-denatured proteins and by disaggregating proteins, also in an autonomous, DnaK-independent fashion. Unfolded proteins bind initially to DnaJ; upon interaction with the DnaJ-bound protein, DnaK hydrolyzes its bound ATP, resulting in the formation of a stable complex. GrpE releases ADP from DnaK; ATP binding to DnaK triggers the release of the substrate protein, thus completing the reaction cycle. Several rounds of ATP-dependent interactions between DnaJ, DnaK and GrpE are required for fully efficient folding. Also involved, together with DnaK and GrpE, in the DNA replication of plasmids through activation of initiation proteins. This Cupriavidus pinatubonensis (strain JMP 134 / LMG 1197) (Cupriavidus necator (strain JMP 134)) protein is Chaperone protein DnaJ.